We begin with the raw amino-acid sequence, 196 residues long: Interferon lambda-3 (196 aa).

An N-terminal signal peptide occupies residues 1-21 (MTGDCMPVLVLMAAVLTVTGA). Intrachain disulfides connect cysteine 37/cysteine 136, cysteine 71/cysteine 169, and cysteine 188/cysteine 195.

This sequence belongs to the lambda interferon family.

It localises to the secreted. Cytokine with antiviral, antitumour and immunomodulatory activities. Plays a critical role in the antiviral host defense, predominantly in the epithelial tissues. Acts as a ligand for the heterodimeric class II cytokine receptor composed of IL10RB and IFNLR1, and receptor engagement leads to the activation of the JAK/STAT signaling pathway resulting in the expression of IFN-stimulated genes (ISG), which mediate the antiviral state. Has a restricted receptor distribution and therefore restricted targets: is primarily active in epithelial cells and this cell type-selective action is because of the epithelial cell-specific expression of its receptor IFNLR1. Seems not to be essential for early virus-activated host defense in vaginal infection, but plays an important role in Toll-like receptor (TLR)-induced antiviral defense. Plays a significant role in the antiviral immune defense in the intestinal epithelium. Exerts an immunomodulatory effect by up-regulating MHC class I antigen expression. The protein is Interferon lambda-3 (IFNL3) of Homo sapiens (Human).